We begin with the raw amino-acid sequence, 218 residues long: Probable nicotinate-nucleotide adenylyltransferase (218 aa).

The protein belongs to the NadD family.

The catalysed reaction is nicotinate beta-D-ribonucleotide + ATP + H(+) = deamido-NAD(+) + diphosphate. Its pathway is cofactor biosynthesis; NAD(+) biosynthesis; deamido-NAD(+) from nicotinate D-ribonucleotide: step 1/1. Functionally, catalyzes the reversible adenylation of nicotinate mononucleotide (NaMN) to nicotinic acid adenine dinucleotide (NaAD). The sequence is that of Probable nicotinate-nucleotide adenylyltransferase from Corynebacterium glutamicum (strain ATCC 13032 / DSM 20300 / JCM 1318 / BCRC 11384 / CCUG 27702 / LMG 3730 / NBRC 12168 / NCIMB 10025 / NRRL B-2784 / 534).